The primary structure comprises 128 residues: RutC family protein BUsg_359 (128 aa).

This sequence belongs to the RutC family.

The protein is RutC family protein BUsg_359 of Buchnera aphidicola subsp. Schizaphis graminum (strain Sg).